Reading from the N-terminus, the 294-residue chain is 33 kDa chaperonin (294 aa).

2 disulfides stabilise this stretch: cysteine 239-cysteine 241 and cysteine 272-cysteine 275.

The protein belongs to the HSP33 family. In terms of processing, under oxidizing conditions two disulfide bonds are formed involving the reactive cysteines. Under reducing conditions zinc is bound to the reactive cysteines and the protein is inactive.

It localises to the cytoplasm. Functionally, redox regulated molecular chaperone. Protects both thermally unfolding and oxidatively damaged proteins from irreversible aggregation. Plays an important role in the bacterial defense system toward oxidative stress. In Listeria monocytogenes serovar 1/2a (strain ATCC BAA-679 / EGD-e), this protein is 33 kDa chaperonin.